The sequence spans 88 residues: Large ribosomal subunit protein bL27 (88 aa).

It belongs to the bacterial ribosomal protein bL27 family.

The sequence is that of Large ribosomal subunit protein bL27 from Mycolicibacterium vanbaalenii (strain DSM 7251 / JCM 13017 / BCRC 16820 / KCTC 9966 / NRRL B-24157 / PYR-1) (Mycobacterium vanbaalenii).